A 620-amino-acid chain; its full sequence is MSPSSRFRNLVSVDSSSQDFGKRSSLYASLLDSASVSSLPGICSTAEDRDVEDESWKDPSSSSHCAKTEGGACAFPRLNQVLSSLRDPMGVFSRAKRRRSLGKAVGLSTSVICVVALFGIVCLCLYGLVNFSFTSVETSPLDDPRNSPVMGELGNPQASTPSSARADTPARHDRQNQMFSPWSVQNEQFLGEDSDALPHAGPLFRSGVMVMPLRKMKSLRRIGWDKNTITVPDLQAHLVAALRMQEGLSKKDDGNLSGLSDGDDISIHDYMNSQYYTEIYVGSPGQKVRVVVDTGSSDLWVCSASCGILLNILHKTYNHGKSDTYHADGTPYHVQYASGPVGGFLSADDVALASLKTKNFLLAEAVDLKGLGTAFFFGKFDGILGMGFPSLATKGLKPFMQAAVEQNVVKNWVFVFYLASANGVDGELAIGGVDQERFIGDINFSPVVDFRYWMINTKGLKSDGDLIAPTTKMIIDSGTSLIVGPLDEVKRIATMMGAFSVPLMPEGMFFISCEKAKVLRDLQLEIEGQDYPIKIKDLLISASAAAGTPCLFGMMGLKALEGGRPTPQKNGFGIFPPSQLVASAKGPIGRTWILGDLFMRNVYTVFDYDNKQIGFARLKN.

The Cytoplasmic portion of the chain corresponds to 1-110 (MSPSSRFRNL…LGKAVGLSTS (110 aa)). The propeptide occupies 1 to 258 (MSPSSRFRNL…SKKDDGNLSG (258 aa)). The segment at 27–31 (YASLL) is important for proper cellular trafficking. A helical; Signal-anchor for type II membrane protein transmembrane segment spans residues 111–131 (VICVVALFGIVCLCLYGLVNF). Residues 132–620 (SFTSVETSPL…KQIGFARLKN (489 aa)) are Lumenal-facing. A disordered region spans residues 138–174 (TSPLDDPRNSPVMGELGNPQASTPSSARADTPARHDR). The segment covering 156–165 (PQASTPSSAR) has biased composition (polar residues). In terms of domain architecture, Peptidase A1 spans 275–616 (YYTEIYVGSP…DYDNKQIGFA (342 aa)). Residues D293 and D476 contribute to the active site. An intrachain disulfide couples C513 to C550.

This sequence belongs to the peptidase A1 family. Proteolytically cleaved into the soluble active mature form by, at least, cysteine protease CPL. Undergoes at least four processing steps; the first cleavage removes the propeptide resulting in the production of a soluble 45 kDa protein, which is further processed into a 35 kDa form followed by an additional processing into the final active 30 kDa form.

Its subcellular location is the membrane. The protein localises to the vacuole. Its function is as follows. Aspartyl protease which is dispensable for protein degradation in the vacuolar compartment (VAC) or for tachyzoite and bradyzoite viability. The polypeptide is Aspartic protease 1 (Toxoplasma gondii).